We begin with the raw amino-acid sequence, 455 residues long: Golgi pH regulator (455 aa).

5 helical membrane-spanning segments follow: residues isoleucine 5–phenylalanine 25, valine 46–leucine 66, leucine 79–valine 99, cysteine 114–leucine 134, and valine 150–proline 170. Asparagine 180 is a glycosylation site (N-linked (GlcNAc...) asparagine). Helical transmembrane passes span phenylalanine 288–isoleucine 308, isoleucine 343–leucine 363, valine 378–isoleucine 398, and tryptophan 425–histidine 445.

Belongs to the Golgi pH regulator (TC 1.A.38) family. Homotrimer. Interacts with RABL3; the interaction stabilizes GPR89.

It localises to the golgi apparatus membrane. The enzyme catalyses iodide(out) = iodide(in). It carries out the reaction chloride(in) = chloride(out). It catalyses the reaction bromide(in) = bromide(out). The catalysed reaction is fluoride(in) = fluoride(out). In terms of biological role, voltage-gated channel that enables the transfer of monoatomic anions such as iodide, chloride, bromide and fluoride which may function in counter-ion conductance and participates in Golgi acidification. Plays a role in lymphocyte development, probably by acting as a RABL3 effector in hematopoietic cells. The protein is Golgi pH regulator of Mus musculus (Mouse).